The sequence spans 65 residues: DNA gyrase inhibitor YacG (65 aa).

Zn(2+) contacts are provided by C9, C12, C28, and C32. A disordered region spans residues 45-65 (KRIPSSGDLSESDDWSEEPKQ). Residues 54–65 (SESDDWSEEPKQ) are compositionally biased toward acidic residues.

Belongs to the DNA gyrase inhibitor YacG family. As to quaternary structure, interacts with GyrB. Zn(2+) serves as cofactor.

Inhibits all the catalytic activities of DNA gyrase by preventing its interaction with DNA. Acts by binding directly to the C-terminal domain of GyrB, which probably disrupts DNA binding by the gyrase. This Shigella boydii serotype 18 (strain CDC 3083-94 / BS512) protein is DNA gyrase inhibitor YacG.